The primary structure comprises 142 residues: Transcriptional regulator MraZ (142 aa).

SpoVT-AbrB domains are found at residues 5–51 (ASAL…PRPE) and 77–120 (AMDV…DAQT).

It belongs to the MraZ family. Forms oligomers.

Its subcellular location is the cytoplasm. The protein localises to the nucleoid. This is Transcriptional regulator MraZ from Paraburkholderia xenovorans (strain LB400).